The primary structure comprises 2245 residues: Basic helix-loop-helix domain-containing protein USF3 (2245 aa).

Residues 1–28 (MPEMTENETPTKKQHRKKNRETHNAVER) form a disordered region. Residues 18–69 (KNRETHNAVERHRKKKINAGINRIGELIPCSPALKQSKNMILDQAFKYITEL) form the bHLH domain. Positions 77–112 (LLNGGNNEQAEEIKKLRKQLEEIQKENGRYIELLKA) form a coiled coil. Disordered regions lie at residues 271-290 (LHTC…QENP), 447-470 (SQTP…TSNH), 881-900 (SKSK…VTSE), 906-933 (AAKS…ALSD), 1015-1041 (KNPQ…IVDS), 1164-1238 (PSEA…SITS), 1307-1331 (IPNS…AKRA), 1460-1624 (IKQQ…VSGH), 1636-1664 (LEQQ…ERNR), 1736-1764 (TFKP…GNPV), 1777-1815 (ISQN…ENTC), 1834-1859 (GSQR…YNCP), and 1891-2031 (STLN…QPAT). A compositionally biased stretch (polar residues) spans 273–288 (TCLNDQNSSENKNGQE). Residues 881–896 (SKSKSAEKSSPPSQES) are compositionally biased toward low complexity. The segment covering 912 to 925 (STPNLQQETSQDKP) has biased composition (polar residues). Polar residues-rich tracts occupy residues 1185 to 1202 (GTGQ…QGSI) and 1219 to 1238 (IKTS…SITS). The span at 1319 to 1331 (PSHESRKDSAKRA) shows a compositional bias: basic and acidic residues. The span at 1462 to 1478 (QQQQQQQQQQQQQQQQQ) shows a compositional bias: low complexity. Composition is skewed to polar residues over residues 1501–1520 (SVHS…QEVQ) and 1528–1538 (VQGTQTSQLSL). The span at 1560–1569 (QQMQQQMQQH) shows a compositional bias: low complexity. Residues 1570–1585 (FGSSQTEKSCENPSTS) are compositionally biased toward polar residues. Residues 1593–1624 (QNHLNQDIMHQQQDVGSRQQGSGVSSEHVSGH) show a composition bias toward low complexity. Residues 1636 to 1654 (LEQQMVSQPSIVTRSSDMT) show a composition bias toward polar residues. Composition is skewed to polar residues over residues 1904-1923 (GDIQ…SNPM) and 1998-2007 (SGNQRQSTVF).

It is found in the nucleus. Involved in the negative regulation of epithelial-mesenchymal transition, the process by which epithelial cells lose their polarity and adhesion properties to become mesenchymal cells with enhanced migration and invasive properties. The sequence is that of Basic helix-loop-helix domain-containing protein USF3 from Homo sapiens (Human).